Reading from the N-terminus, the 93-residue chain is HssA/B-like protein 26 (93 aa).

The protein belongs to the hssA/B family.

The sequence is that of HssA/B-like protein 26 (hssl26) from Dictyostelium discoideum (Social amoeba).